The chain runs to 187 residues: Shikimate kinase (187 aa).

G19–T24 contributes to the ATP binding site. S23 is a binding site for Mg(2+). Substrate is bound by residues D41, R65, and G87. R124 lines the ATP pocket. R143 is a binding site for substrate. R160 serves as a coordination point for ATP.

The protein belongs to the shikimate kinase family. In terms of assembly, monomer. It depends on Mg(2+) as a cofactor.

It localises to the cytoplasm. The enzyme catalyses shikimate + ATP = 3-phosphoshikimate + ADP + H(+). It participates in metabolic intermediate biosynthesis; chorismate biosynthesis; chorismate from D-erythrose 4-phosphate and phosphoenolpyruvate: step 5/7. Functionally, catalyzes the specific phosphorylation of the 3-hydroxyl group of shikimic acid using ATP as a cosubstrate. The protein is Shikimate kinase of Rippkaea orientalis (strain PCC 8801 / RF-1) (Cyanothece sp. (strain PCC 8801)).